The following is a 1536-amino-acid chain: Tyrosine-protein kinase BAZ1B (1536 aa).

One can recognise a WAC domain in the interval 25–130 (EVYTIEHTKE…GEKCDLMVGN (106 aa)). Disordered stretches follow at residues 144–207 (LENP…TTMK), 304–470 (PSTK…GKPF), and 557–579 (LREKAKERREKEMQVRREMSRRY). Composition is skewed to basic and acidic residues over residues 151 to 196 (NAEK…DRAR) and 334 to 343 (AKGDKKKNKD). Over residues 344–355 (SQNIPLSPTIWS) the composition is skewed to polar residues. The span at 392–401 (KQGDKKSSDP) shows a compositional bias: basic and acidic residues. The span at 443–452 (AKSPAAAGSP) shows a compositional bias: low complexity. Positions 515-583 (EELKELVQKR…EMSRRYEDQE (69 aa)) form a coiled coil. Positions 603 to 667 (NTIFGDVAMV…LQTLLQDELA (65 aa)) constitute a DDT domain. Coiled coils occupy residues 768-803 (HQKSAEMWKERVATLKEANDRKRAEKQKRKEQMETK) and 850-890 (IQAK…FQDA). Over residues 785 to 832 (ANDRKRAEKQKRKEQMETKTDGDVLIKAEKKKESTVKKETPKVLPKEE) the composition is skewed to basic and acidic residues. Residues 785 to 839 (ANDRKRAEKQKRKEQMETKTDGDVLIKAEKKKESTVKKETPKVLPKEEPEPEDMI) form a disordered region. Residues 940-973 (PPEEEPVLTEEEEEEEEVKKEEETEDGEKEDEGS) are disordered. 2 stretches are compositionally biased toward acidic residues: residues 941–955 (PEEEPVLTEEEEEEE) and 962–972 (ETEDGEKEDEG). A PHD-type zinc finger spans residues 1202–1252 (NARCKVCRRKGEDDKLILCDECNKAFHLFCLRPALYRIPAGEWLCPACQPT). Disordered stretches follow at residues 1256–1371 (RSSR…KDVE) and 1477–1536 (LRRR…TKQK). Residues 1261–1293 (RNYKEDSEEEEDSEEEDEEESEEEDSEEEHRNT) are a coiled coil. The span at 1266–1287 (DSEEEEDSEEEDEEESEEEDSE) shows a compositional bias: acidic residues. The span at 1297-1316 (LRSRKKVKTSSKSKMQKKPA) shows a compositional bias: basic residues. Residues 1325–1350 (KTDTNPSKTSPKSSAKPKSRAAPSSP) are compositionally biased toward low complexity. Ser1349 carries the post-translational modification Phosphoserine. The 105-residue stretch at 1366 to 1470 (RKKDVELQKC…EAFVELLQKS (105 aa)) folds into the Bromo domain. Positions 1491 to 1502 (NSDDDDDDEEED) are enriched in acidic residues. The span at 1506-1524 (KKQKNGKQGKKASSKRKVE) shows a compositional bias: basic residues. Residues 1525 to 1536 (HSRTEKYQTKQK) show a composition bias toward basic and acidic residues.

The protein belongs to the WAL family. BAZ1B subfamily. Interacts with smarca5/snf2h; the interaction is direct and forms the WICH complex. Component of the B-WICH complex. Mn(2+) serves as cofactor.

It localises to the nucleus. It catalyses the reaction L-tyrosyl-[protein] + ATP = O-phospho-L-tyrosyl-[protein] + ADP + H(+). Its function is as follows. Atypical tyrosine-protein kinase that plays a central role in chromatin remodeling and acts as a transcription regulator. Involved in DNA damage response by phosphorylating 'Tyr-142' of histone H2AX (H2AXY142ph). H2AXY142ph plays a central role in DNA repair and acts as a mark that distinguishes between apoptotic and repair responses to genotoxic stress. Essential component of the WICH complex, a chromatin remodeling complex that mobilizes nucleosomes and reconfigures irregular chromatin to a regular nucleosomal array structure. The WICH complex regulates the transcription of various genes, has a role in RNA polymerase I and RNA polymerase III transcription, mediates the histone H2AX phosphorylation at 'Tyr-142', and is involved in the maintenance of chromatin structures during DNA replication processes. This Danio rerio (Zebrafish) protein is Tyrosine-protein kinase BAZ1B (baz1b).